The primary structure comprises 177 residues: Large ribosomal subunit protein uL6 (177 aa).

Belongs to the universal ribosomal protein uL6 family. In terms of assembly, part of the 50S ribosomal subunit.

Its function is as follows. This protein binds to the 23S rRNA, and is important in its secondary structure. It is located near the subunit interface in the base of the L7/L12 stalk, and near the tRNA binding site of the peptidyltransferase center. The polypeptide is Large ribosomal subunit protein uL6 (Shewanella denitrificans (strain OS217 / ATCC BAA-1090 / DSM 15013)).